The following is a 163-amino-acid chain: Ribosome maturation factor RimP (163 aa).

The protein belongs to the RimP family.

The protein resides in the cytoplasm. Functionally, required for maturation of 30S ribosomal subunits. The protein is Ribosome maturation factor RimP of Streptococcus mutans serotype c (strain ATCC 700610 / UA159).